Reading from the N-terminus, the 1029-residue chain is U2 snRNP-associated SURP motif-containing protein (1029 aa).

2 disordered regions span residues 1–110 and 141–273; these read MADK…KEDE and VNAA…DPST. At Ala-2 the chain carries N-acetylalanine. A compositionally biased stretch (polar residues) spans 7-16; the sequence is GGSQKASSKN. A compositionally biased stretch (basic residues) spans 45–54; it reads TRPKSPRKHN. Positions 55-64 are enriched in basic and acidic residues; sequence YRNESSRESL. A Phosphoserine modification is found at Ser-67. Lys-80 is covalently cross-linked (Glycyl lysine isopeptide (Lys-Gly) (interchain with G-Cter in SUMO2)). A coiled-coil region spans residues 92 to 121; sequence AKRTLSKKEQEELKKKEDEKAAAEIYEEFL. Composition is skewed to basic and acidic residues over residues 97–110 and 144–155; these read SKKE…KEDE and AKDEHETDEKRG. Residues Lys-145 and Lys-168 each participate in a glycyl lysine isopeptide (Lys-Gly) (interchain with G-Cter in SUMO2) cross-link. Residues 169–178 are compositionally biased toward polar residues; that stretch reads NPPNQSSNER. Positions 186–222 are enriched in basic and acidic residues; sequence ETKKPPLKKGEKEKKKSNLELFKEELKQIQEERDERH. A coiled-coil region spans residues 192–232; that stretch reads LKKGEKEKKKSNLELFKEELKQIQEERDERHKTKGRLSRFE. Residue Ser-202 is modified to Phosphoserine. A Glycyl lysine isopeptide (Lys-Gly) (interchain with G-Cter in SUMO2) cross-link involves residue Lys-208. Phosphoserine is present on Ser-236. A compositionally biased stretch (basic and acidic residues) spans 239 to 249; it reads DGQRRSMDVPS. Residues 274-355 form the RRM domain; that stretch reads TNLYLGNINP…FEMKLGWGKA (82 aa). The SURP motif repeat unit spans residues 430-473; it reads LIHRMIEFVVREGPMFEAMIMNREINNPMFRFLFENQTPAHVYY. Position 485 is a phosphoserine (Ser-485). The CID domain occupies 534–679; that stretch reads LKEEQRDKLE…KLQNIFLGLV (146 aa). Residues 704–729 form a disordered region; the sequence is DGAPLEDVDGIPIDATPIDDLDGVPI. Phosphothreonine is present on Thr-719. Residues Lys-748 and Lys-749 each participate in a glycyl lysine isopeptide (Lys-Gly) (interchain with G-Cter in SUMO2) cross-link. Lys-760 is modified (N6-acetyllysine; alternate). Residue Lys-760 forms a Glycyl lysine isopeptide (Lys-Gly) (interchain with G-Cter in SUMO2); alternate linkage. Disordered stretches follow at residues 778-841 and 855-1029; these read KWEL…EEKR and QDEL…KNKH. The span at 786–806 shows a compositional bias: acidic residues; it reads EESEEEENQNQEEESEDEEDT. Phosphoserine is present on residues Ser-788, Ser-800, and Ser-811. Composition is skewed to basic and acidic residues over residues 810-841 and 874-922; these read KSEE…EEKR and QVEH…TPTR. Glycyl lysine isopeptide (Lys-Gly) (interchain with G-Cter in SUMO2) cross-links involve residues Lys-829 and Lys-832. Positions 837–915 form a coiled coil; the sequence is SEEKRAKLRE…ESRSKDKKEK (79 aa). Thr-931 bears the Phosphothreonine mark. Ser-946 and Ser-948 each carry phosphoserine. The segment covering 950–980 has biased composition (basic and acidic residues); sequence KSERSERSERSHKESSRSRSSHKDSPRDASK. A compositionally biased stretch (basic residues) spans 991 to 1029; that stretch reads TPKRSRRSRSRSPKKSGKKSRSQSRSPHRSHKKSKKNKH.

It belongs to the splicing factor SR family. As to quaternary structure, interacts with ERBB4.

The protein resides in the nucleus. This Mus musculus (Mouse) protein is U2 snRNP-associated SURP motif-containing protein (U2surp).